Consider the following 189-residue polypeptide: Elongation factor P (189 aa).

It belongs to the elongation factor P family.

The protein localises to the cytoplasm. It functions in the pathway protein biosynthesis; polypeptide chain elongation. Involved in peptide bond synthesis. Stimulates efficient translation and peptide-bond synthesis on native or reconstituted 70S ribosomes in vitro. Probably functions indirectly by altering the affinity of the ribosome for aminoacyl-tRNA, thus increasing their reactivity as acceptors for peptidyl transferase. This is Elongation factor P from Campylobacter lari (strain RM2100 / D67 / ATCC BAA-1060).